A 112-amino-acid polypeptide reads, in one-letter code: MGFRVLVLVVMATTSALPFTFSEEPGRSPFRPALRSEEAQALRHGLTLLLARRADGQPPDMRQPEMRRPEVRQPEFAELSVGQRRWDVDQCMYYCLTGVVGYSYTECQTMCT.

An N-terminal signal peptide occupies residues 1-22 (MGFRVLVLVVMATTSALPFTFS). Residues 23-85 (EEPGRSPFRP…FAELSVGQRR (63 aa)) constitute a propeptide that is removed on maturation. A disordered region spans residues 53–74 (RADGQPPDMRQPEMRRPEVRQP). Residues 62–74 (RQPEMRRPEVRQP) are compositionally biased toward basic and acidic residues. Intrachain disulfides connect Cys91–Cys111 and Cys95–Cys107.

This sequence belongs to the conotoxin R superfamily. Expressed by the venom duct.

The protein resides in the secreted. This is Conotoxin vil14.5 from Conus villepinii (Villepin's cone).